A 278-amino-acid polypeptide reads, in one-letter code: Large ribosomal subunit protein uL2 (278 aa).

2 disordered regions span residues 27–58 (STPE…GGGH) and 224–278 (VVMN…GKKR). Residues 37-58 (LHGKGGRNAHGRITTRHKGGGH) are compositionally biased toward basic residues. The span at 253-268 (PEGRTRKPNKPSDKLI) shows a compositional bias: basic and acidic residues. Positions 269 to 278 (VRRRRTGKKR) are enriched in basic residues.

Belongs to the universal ribosomal protein uL2 family. As to quaternary structure, part of the 50S ribosomal subunit. Forms a bridge to the 30S subunit in the 70S ribosome.

Its function is as follows. One of the primary rRNA binding proteins. Required for association of the 30S and 50S subunits to form the 70S ribosome, for tRNA binding and peptide bond formation. It has been suggested to have peptidyltransferase activity; this is somewhat controversial. Makes several contacts with the 16S rRNA in the 70S ribosome. This chain is Large ribosomal subunit protein uL2, found in Mycobacterium sp. (strain KMS).